Reading from the N-terminus, the 259-residue chain is Ribosomal RNA small subunit methyltransferase A (259 aa).

The S-adenosyl-L-methionine site is built by asparagine 13, leucine 15, glycine 40, glutamate 61, aspartate 85, and asparagine 103.

It belongs to the class I-like SAM-binding methyltransferase superfamily. rRNA adenine N(6)-methyltransferase family. RsmA subfamily.

Its subcellular location is the cytoplasm. The enzyme catalyses adenosine(1518)/adenosine(1519) in 16S rRNA + 4 S-adenosyl-L-methionine = N(6)-dimethyladenosine(1518)/N(6)-dimethyladenosine(1519) in 16S rRNA + 4 S-adenosyl-L-homocysteine + 4 H(+). Specifically dimethylates two adjacent adenosines (A1518 and A1519) in the loop of a conserved hairpin near the 3'-end of 16S rRNA in the 30S particle. May play a critical role in biogenesis of 30S subunits. The sequence is that of Ribosomal RNA small subunit methyltransferase A from Neisseria gonorrhoeae (strain NCCP11945).